The sequence spans 343 residues: MQAIIDAEQSFKFPVLVGDIGGTNARFSILVDSNAEPKEFPVLQTADYATIDEAIQHAILDQTAIQPRSVILAVAGPVDGDEIDLTNCDWVVRPKKMIADLGFEDVTVLNDFEAQALAVVSLEGHHMEQIGGKPEEAVATRVVLGPGTGLGVAGLVRTRHAWVPVPGEGGHIDIGPRTERDYQIFPHIERIEGRVTGEQILSGRGLRNLYLGICAADKITPTLETPVDITSAGLDGSNPQAAETLDLFATYLGRLAGDLALIFMAHGGVYLSGGIPVRILSALKAGSFRAAFEDKAPHKAIMRDIPVRVITYQLAALTGLSAFARTPSRFEVSTEGRRWRMRR.

18–23 is a binding site for ATP; it reads GDIGGT.

It belongs to the bacterial glucokinase family.

It localises to the cytoplasm. It catalyses the reaction D-glucose + ATP = D-glucose 6-phosphate + ADP + H(+). This chain is Glucokinase, found in Brucella suis biovar 1 (strain 1330).